The sequence spans 161 residues: ATP synthase subunit b (161 aa).

The helical transmembrane segment at 10–29 threads the bilayer; the sequence is AVVQLLNFLFLLWILNKLLY.

This sequence belongs to the ATPase B chain family. In terms of assembly, F-type ATPases have 2 components, F(1) - the catalytic core - and F(0) - the membrane proton channel. F(1) has five subunits: alpha(3), beta(3), gamma(1), delta(1), epsilon(1). F(0) has three main subunits: a(1), b(2) and c(10-14). The alpha and beta chains form an alternating ring which encloses part of the gamma chain. F(1) is attached to F(0) by a central stalk formed by the gamma and epsilon chains, while a peripheral stalk is formed by the delta and b chains.

The protein localises to the cell inner membrane. Its function is as follows. F(1)F(0) ATP synthase produces ATP from ADP in the presence of a proton or sodium gradient. F-type ATPases consist of two structural domains, F(1) containing the extramembraneous catalytic core and F(0) containing the membrane proton channel, linked together by a central stalk and a peripheral stalk. During catalysis, ATP synthesis in the catalytic domain of F(1) is coupled via a rotary mechanism of the central stalk subunits to proton translocation. Component of the F(0) channel, it forms part of the peripheral stalk, linking F(1) to F(0). This chain is ATP synthase subunit b, found in Fervidobacterium nodosum (strain ATCC 35602 / DSM 5306 / Rt17-B1).